The primary structure comprises 411 residues: Dual-specificity RNA methyltransferase RlmN (411 aa).

E125 (proton acceptor) is an active-site residue. In terms of domain architecture, Radical SAM core spans 131-380 (EEGRGTLCVS…IRTPRGRDIL (250 aa)). C138 and C383 are joined by a disulfide. Positions 145, 149, and 152 each coordinate [4Fe-4S] cluster. Residues 209–210 (GE), S241, 263–265 (SLH), and N340 contribute to the S-adenosyl-L-methionine site. The S-methylcysteine intermediate role is filled by C383.

The protein belongs to the radical SAM superfamily. RlmN family. It depends on [4Fe-4S] cluster as a cofactor.

It is found in the cytoplasm. It catalyses the reaction adenosine(2503) in 23S rRNA + 2 reduced [2Fe-2S]-[ferredoxin] + 2 S-adenosyl-L-methionine = 2-methyladenosine(2503) in 23S rRNA + 5'-deoxyadenosine + L-methionine + 2 oxidized [2Fe-2S]-[ferredoxin] + S-adenosyl-L-homocysteine. It carries out the reaction adenosine(37) in tRNA + 2 reduced [2Fe-2S]-[ferredoxin] + 2 S-adenosyl-L-methionine = 2-methyladenosine(37) in tRNA + 5'-deoxyadenosine + L-methionine + 2 oxidized [2Fe-2S]-[ferredoxin] + S-adenosyl-L-homocysteine. Specifically methylates position 2 of adenine 2503 in 23S rRNA and position 2 of adenine 37 in tRNAs. m2A2503 modification seems to play a crucial role in the proofreading step occurring at the peptidyl transferase center and thus would serve to optimize ribosomal fidelity. The polypeptide is Dual-specificity RNA methyltransferase RlmN (Brucella anthropi (strain ATCC 49188 / DSM 6882 / CCUG 24695 / JCM 21032 / LMG 3331 / NBRC 15819 / NCTC 12168 / Alc 37) (Ochrobactrum anthropi)).